The primary structure comprises 339 residues: Methionine import ATP-binding protein MetN 2 (339 aa).

Residues 2 to 241 (ISFNNVSKVY…PKTKTTQNFV (240 aa)) enclose the ABC transporter domain. 38-45 (GFSGAGKS) is a binding site for ATP.

It belongs to the ABC transporter superfamily. Methionine importer (TC 3.A.1.24) family. In terms of assembly, the complex is composed of two ATP-binding proteins (MetN), two transmembrane proteins (MetI) and a solute-binding protein (MetQ).

It is found in the cell membrane. The enzyme catalyses L-methionine(out) + ATP + H2O = L-methionine(in) + ADP + phosphate + H(+). It catalyses the reaction D-methionine(out) + ATP + H2O = D-methionine(in) + ADP + phosphate + H(+). In terms of biological role, part of the ABC transporter complex MetNIQ involved in methionine import. Responsible for energy coupling to the transport system. The protein is Methionine import ATP-binding protein MetN 2 of Bacillus cereus (strain ZK / E33L).